Consider the following 2837-residue polypeptide: MNVSAYLPTCLPTYLPTCLPTYLPTYLPTYLPICLSEENNGIGIIGIGFRLPGGGSGKSLGNPSELWKELVNGYDGIIETNERWSDNFNKLGEINNRYGGLLPMDEVKSFDPLFFGISPPEATAIDPQQRLLLKCTWEAIEDAMIDPINLRGSNTSVFIGNTTHEYRDLNRTIDSIQTNIFSSSSHSSSNRVSNIFDFHGPSITIDTACSSSSNAVVLGCKSIIEGNSKMSIVGGTSLIFDANTPKSFSYMNMLSKDGRCKSFDANADGYVKSECIGVLLLKDLNQAIIDGDRVYCVIKGTSSNVDGNGYSDKSNFYSPSAQSQAENIKMALSSGNINAKDVDYVEAHGTGTPVGDPIEVEGISSIFKDNHSKENPLLIGSFKSMIGHCEASSGIASLVKCCLMFKNRYFIPNLHFKTPNPLIKFNEWNLKVVVEPTPFPKKEITMAVNNFGVTGSNVCIILKDFNYNHNSSSDNNNTINLKQQQHQNNIEYLIPFSANSTKSLEQYQSLISNFNQETMEFNDFVKEQIMSKSNSLYQRSVILGSNWNDFKDNLISTNNNIKTIKTTSSNISIKSKNPIIIMVFCGQGSQYNTMALELYKNEPIFRKTMDMLDNKLSKYYGFSILEKLRSIPVDDMKSIHNPALAQPAICMVQISLFELYKHWGIKPTFIVGHSLGEVTAAYCSGMIDLETECYLIYHRSIAQSTTTGCGRMLSINISPEKFIEQFSSRYPDVEISCYNSPTSIVIGGKEDQLNKISEELKSKGEFTSMLGSLSSFHTSSQKAIKEYILSLDYKSKESEIPIFSTVTTNLFDYKTTPYSPKYTYENILKSVNFTQTIENLYKHIENNQLGTDIVFIELAPHPTLQFYLKQMIPKDSSYFGKGDSISIYSPLHKKKNDVKEIRQTISQLYCQNGYNINFKCQFENINRSIVPTHKLPLYQWDEKQFWKINSLYENYYLTGPPIDILGNSITDSPFVKSYQTFINIKRKPFQYLKGHVVKGKFYFPGCGYIDNLLKIYPSQDITISTLEFSTPFIFTDDSVNHCLQTNIYPTGKTEYKVLFHFKDQKKNEWIQSSFGNFQLFKHNGEKSLKIFNQKYNIKDLIEKRCNLTKLTKEDLYDHIKLKTGLTYSGMFQAVSMCYLGDNCSLSVVSLELPKHLPDQKSFFNSSILDCCLHGMIGLVDEHCQLVFDRIEGFNLYSSNIPSARDQHTNVYVYSSLNAKMGDSYFASIVVMLEDGTVLIEIDNAACTSLTPIQDSLKIEAPTNELYSTYLQSKDSLILPPQTFESLYQQEKGQNDILVGTIIKQSLVPFVNEKMVFRILDFSSGFADYNGTTFHSSNNVLEKFNQLLKEFPLCEIDIEYTFGSVPQSLTSSIKDKLSHINERVSILYRDYSINDPLLLEDNQLKPSQYDIVLINDLEKETNDIKATLYMIYNLMVPNGQLILINNDGNNLIEIKELLDQCNFKDTIISNDKKSIIQTRKPQLLSELSPNPNIDSYDQIIIYSNDDSEICNKFLKSLESTDDKILSIISTISKFNEFVEKQSITDKSVIYFIKTMEQLTLDNFKSITFEYIEINRKLLKLNSMCKHVLITSDSRKDNYLASSVIGAARYFDEFQQLQLFTLDFDKESIIEYTHNNNEKNLVSLIELLTDKKISIQKEYLIRNGKVYFERIKKEQNLRKKFKSESYQDLVENDLVAVLSPNLEYELKPMTKDLEPFEVQVEIKSFALNYKDYLTYIGSVPPEMVNHKTGDINDPEFGSDFSGVITRVSKNNCSEFKVGDQVYGTAYNTASSKSIIDSGSIYFKPNNLSHEQASTIPVVYSTSLHSIYNIGNLKNYESILIHSASGGVGLSSLNILKWKGHCSYIFLTVGSPEKEKYLRDTYGSLITGIYSTRDKSYVQKIKDKLKELGSDKTGVDLILNTLSSDYMDSNFNCLSKSGRIVDLSITHLNSNEYIDNKKFKFNYGYHNVELLFIAAPILKKLLKSISKAIENNELINNLPITQYSNVNIKNAFEYINQRKHIGKIVVNHDTDLVGNLIKEKINSTSNLDFTLLKSNYQININNLGKNIIVTGQSGIVFEIIKWIVKFAPLVENIIILSKSSMKWQLELLVNRNKHIKFHFKSVDVGDINSMGKAIDEVSNDIDNIDSIFHYAFHQITKNVEAINMDTLDISFGAKTIGAIILHDQSIKRGWKLKNFIIASSVTSSLGSESQCSYVCANNVLESFSQYRKSLGLPSICTSYGLIKSTGFVSRNENVSVMFENLGFNPLSINTILGSLDLQIQNQELSTNLIVSSFNFSNITKYNPQKNNFSKIDYQVSLEEKNKVNQLGHDGNQDNKNSVNQMFLEKVSEVLSIEISKINIDIKLSAYGADSLSIVQLKNWVDKELSGNIITIQQLQTNTISSSIKIITNSLDKKKEGKNKSSTVVNNTNEITTTTKTFEYWKNEAKLDETIIASSIKSDLIIDNKMDKVILLSGSTGFLGGYLLLNLVKMKNCSKIYCLTRSGHLSDQIDLMNKIIDNLKHHKLFEMFEQSELEKIFPVRGDLRKSKLGLSDKMYLEISNQVNLILSCGADINLNANYDEIKPTNVDSTKEFIKLSVSKGTNKPMIPIVNLSSFSIFFGQKLNDEIEFDEYQVGIPSLSNLNNLPGGYIQSKLICEHLLLEASSRGIPAMTIRLPSIFSNPHTGIGHSGDLLQLIIKSISVTKYFPIEPTSLFISPVTWVAQNIINLIFNEGCWSKTKINTLNIISLNGELQTTNEIFLMIKKNFNYKETTLINWKKMISESNDKTCIRLRTFHPLDFTPTKYHMSKEFKISKNTKSLLISFGSYDGWNITEQMVLNLLKQ.

Residues 39–464 form the Ketosynthase family 3 (KS3) domain; it reads NNGIGIIGIG…GSNVCIILKD (426 aa). Catalysis depends on for beta-ketoacyl synthase activity residues Cys-209, His-348, and His-388. Residues 664-697 form an acyl/malonyl transferase region; sequence GIKPTFIVGHSLGEVTAAYCSGMIDLETECYLIY. The active-site For acyl/malonyl transferase activity is Ser-674. The N-terminal hotdog fold stretch occupies residues 962–1084; sequence IDILGNSITD…GNFQLFKHNG (123 aa). A PKS/mFAS DH domain is found at 962-1255; the sequence is IDILGNSITD…CTSLTPIQDS (294 aa). The active-site Proton acceptor; for dehydratase activity is the His-995. The interval 1106–1255 is C-terminal hotdog fold; that stretch reads NLTKLTKEDL…CTSLTPIQDS (150 aa). Catalysis depends on Asp-1169, which acts as the Proton donor; for dehydratase activity. The Carrier domain maps to 2330 to 2407; sequence DNKNSVNQMF…SSIKIITNSL (78 aa). O-(pantetheine 4'-phosphoryl)serine is present on Ser-2367. Residues 2464-2484 traverse the membrane as a helical segment; that stretch reads KVILLSGSTGFLGGYLLLNLV.

The cofactor is pantetheine 4'-phosphate.

The protein resides in the membrane. Probable polyketide synthase. This Dictyostelium discoideum (Social amoeba) protein is Probable polyketide synthase 3 (pks3).